A 173-amino-acid chain; its full sequence is Transcription factor E (173 aa).

The 84-residue stretch at 3–86 (DDPLVKSLLT…SWKFEEQEVI (84 aa)) folds into the HTH TFE/IIEalpha-type domain.

Belongs to the TFE family. In terms of assembly, monomer. Interaction with RNA polymerase subunits RpoF and RpoE is necessary for Tfe stimulatory transcription activity. Able to interact with Tbp and RNA polymerase in the absence of DNA promoter. Interacts both with the preinitiation and elongation complexes.

Transcription factor that plays a role in the activation of archaeal genes transcribed by RNA polymerase. Facilitates transcription initiation by enhancing TATA-box recognition by TATA-box-binding protein (Tbp), and transcription factor B (Tfb) and RNA polymerase recruitment. Not absolutely required for transcription in vitro, but particularly important in cases where Tbp or Tfb function is not optimal. It dynamically alters the nucleic acid-binding properties of RNA polymerases by stabilizing the initiation complex and destabilizing elongation complexes. Seems to translocate with the RNA polymerase following initiation and acts by binding to the non template strand of the transcription bubble in elongation complexes. This is Transcription factor E from Methanobrevibacter smithii (strain ATCC 35061 / DSM 861 / OCM 144 / PS).